Here is a 103-residue protein sequence, read N- to C-terminus: Large ribosomal subunit protein bL21 (103 aa).

It belongs to the bacterial ribosomal protein bL21 family. As to quaternary structure, part of the 50S ribosomal subunit. Contacts protein L20.

This protein binds to 23S rRNA in the presence of protein L20. This Bordetella avium (strain 197N) protein is Large ribosomal subunit protein bL21.